We begin with the raw amino-acid sequence, 267 residues long: Undecaprenyl-diphosphatase (267 aa).

7 helical membrane-spanning segments follow: residues 39 to 59, 87 to 107, 112 to 132, 145 to 165, 183 to 203, 216 to 236, and 244 to 264; these read PGLA…IWYF, VLYL…LNDL, FRSP…LWAV, VTLR…VPGV, PSVA…AVIV, LPLL…ISVL, and SFGV…ATLA.

The protein belongs to the UppP family.

Its subcellular location is the cell inner membrane. The catalysed reaction is di-trans,octa-cis-undecaprenyl diphosphate + H2O = di-trans,octa-cis-undecaprenyl phosphate + phosphate + H(+). Its function is as follows. Catalyzes the dephosphorylation of undecaprenyl diphosphate (UPP). Confers resistance to bacitracin. In Gemmatimonas aurantiaca (strain DSM 14586 / JCM 11422 / NBRC 100505 / T-27), this protein is Undecaprenyl-diphosphatase.